The chain runs to 95 residues: Beta-defensin 132 (95 aa).

An N-terminal signal peptide occupies residues 1–22; the sequence is MKFLLLVLAALRFLTQVIPASA. 3 disulfide bridges follow: C27–C55, C35–C49, and C39–C56. The tract at residues 72–95 is disordered; the sequence is GNHWQSRRRNTQRKDKKQQTTVTS. A compositionally biased stretch (basic residues) spans 76–87; it reads QSRRRNTQRKDK.

The protein belongs to the beta-defensin family.

The protein localises to the secreted. Has antibacterial activity. The protein is Beta-defensin 132 (DEFB132) of Pongo pygmaeus (Bornean orangutan).